Here is a 373-residue protein sequence, read N- to C-terminus: Protein CAF40 (373 aa).

A disordered region spans residues 1–91 (MFSAQKPIYG…ANATRNNPNM (91 aa)). The span at 11 to 22 (NGAGVNMGGGGP) shows a compositional bias: gly residues. Over residues 50 to 88 (GGPMLMGNTPNNNNSNENGENNGNNGNNGGNDANATRNN) the composition is skewed to low complexity.

The protein belongs to the CNOT9 family. As to quaternary structure, subunit of the 1.0 MDa CCR4-NOT core complex that contains CCR4, CAF1, NOT1, NOT2, NOT3, NOT4, NOT5, CAF40 and CAF130. In the complex interacts with NOT1. The core complex probably is part of a less characterized 1.9 MDa CCR4-NOT complex.

The protein localises to the cytoplasm. The protein resides in the nucleus. Its function is as follows. Acts as a component of the CCR4-NOT core complex, which in the nucleus seems to be a general transcription factor, and in the cytoplasm the major mRNA deadenylase involved in mRNA turnover. The sequence is that of Protein CAF40 (CAF40) from Saccharomyces cerevisiae (strain ATCC 204508 / S288c) (Baker's yeast).